The following is a 335-amino-acid chain: Delta(7)-sterol 5(6)-desaturase erg3B (335 aa).

The next 3 membrane-spanning stretches (helical) occupy residues 74–94 (IWAFGLLLYLTTASLSFALVF), 113–133 (IGQALRAMPVMAALTAPLFLA), and 152–172 (LYTYLQYPLFIAFTDFAIYWI). A Fatty acid hydroxylase domain is found at 160–284 (LFIAFTDFAI…FITFWDRIGG (125 aa)). Positions 173–177 (HRGLH) match the Histidine box-1 motif. The Histidine box-2 motif lies at 186 to 190 (HKPHH). A helical membrane pass occupies residues 219–239 (PFLFPLQKAAYLGLFVFVTIW). N-linked (GlcNAc...) asparagine glycosylation occurs at N256. The Histidine box-3 signature appears at 261-265 (HTIHH).

Belongs to the sterol desaturase family. It depends on Fe cation as a cofactor.

The protein localises to the endoplasmic reticulum membrane. Its pathway is steroid metabolism; ergosterol biosynthesis. Its function is as follows. Delta(7)-sterol 5(6)-desaturase; part of the third module of ergosterol biosynthesis pathway that includes the late steps of the pathway. Erg3B catalyzes the introduction of a C-5 double bond in the B ring to produce 5-dehydroepisterol. The third module or late pathway involves the ergosterol synthesis itself through consecutive reactions that mainly occur in the endoplasmic reticulum (ER) membrane. Firstly, the squalene synthase erg9 catalyzes the condensation of 2 farnesyl pyrophosphate moieties to form squalene, which is the precursor of all steroids. Squalene synthase is crucial for balancing the incorporation of farnesyl diphosphate (FPP) into sterol and nonsterol isoprene synthesis. Secondly, squalene is converted into lanosterol by the consecutive action of the squalene epoxidase erg1 and the lanosterol synthase erg7. Then, the delta(24)-sterol C-methyltransferase erg6 methylates lanosterol at C-24 to produce eburicol. Eburicol is the substrate of the sterol 14-alpha demethylase encoded by cyp51A and cyp51B, to yield 4,4,24-trimethyl ergosta-8,14,24(28)-trienol. The C-14 reductase erg24 then reduces the C14=C15 double bond which leads to 4,4-dimethylfecosterol. A sequence of further demethylations at C-4, involving the C-4 demethylation complex containing the C-4 methylsterol oxidases erg25A or erg25B, the sterol-4-alpha-carboxylate 3-dehydrogenase erg26 and the 3-keto-steroid reductase erg27, leads to the production of fecosterol via 4-methylfecosterol. The C-8 sterol isomerase erg2 then catalyzes the reaction which results in unsaturation at C-7 in the B ring of sterols and thus converts fecosterol to episterol. The sterol-C5-desaturase erg3B then catalyzes the introduction of a C-5 double bond in the B ring to produce 5-dehydroepisterol. The 2 other sterol-C5-desaturases, erg3A and erg3C, seem to be less important in ergosterol biosynthesis. The C-22 sterol desaturase erg5 further converts 5-dehydroepisterol into ergosta-5,7,22,24(28)-tetraen-3beta-ol by forming the C-22(23) double bond in the sterol side chain. Finally, ergosta-5,7,22,24(28)-tetraen-3beta-ol is substrate of the C-24(28) sterol reductases erg4A and erg4B to produce ergosterol. Possible alternative sterol biosynthetic pathways might exist from fecosterol to ergosterol, depending on the activities of the erg3 isoforms. The polypeptide is Delta(7)-sterol 5(6)-desaturase erg3B (Aspergillus fumigatus (strain ATCC MYA-4609 / CBS 101355 / FGSC A1100 / Af293) (Neosartorya fumigata)).